A 423-amino-acid polypeptide reads, in one-letter code: MLPWKKHKFELLAEAPPRQASKPKGYAVSLHYSALSSLARACPEGALSRVGSMFRSKRKKLHITSEDPTYTVLYLGNATTIQARGDGCTDLAVGKIWSKSEAGRQGTKMKLTVSAQGIRMVHAEERALRRPGHLYLLHRVTYCVADARLPKVFAWVYRHELKHKAVMLRCHAVLVSKPEKAQAMALLLYQTSANALAEFKRLKRRDDARHQQQELVGAHTIPLVPLRKLLLHGPCCYKPPVERSRSAPKLGSITEDLLGEQLEQELQEEEEEEQPEGCPEEEENRAAEGDPAEEEAEAQRALVVAMHFECGDLLDTLENGRGEALGGGGGSLGPGAGPPPLLLGSASDMKAELSQLISDLGELSFGNDVRTLQADLRVTRLLSGDSTGSESSIEGGGPDATSATAGDSSRQADGASADEPHSG.

Acidic residues predominate over residues glutamate 263–glutamate 283. Disordered stretches follow at residues glutamate 263–alanine 298, arginine 321–glycine 344, and leucine 382–glycine 423. Residues glutamate 323–glycine 335 show a composition bias toward gly residues. Over residues serine 383–isoleucine 393 the composition is skewed to low complexity. Positions threonine 401–glutamine 411 are enriched in polar residues.

Belongs to the FAM43 family.

In Homo sapiens (Human), this protein is Protein FAM43A (FAM43A).